A 216-amino-acid chain; its full sequence is UDP-N-acetylglucosamine transferase subunit ALG14 (216 aa).

Residues 1 to 3 (MVC) are Lumenal-facing. A helical membrane pass occupies residues 4–24 (VLTLAASAGGLAVLLIVRLWA). Topologically, residues 25–216 (VLRSHPVTPR…PKSVYLGRIV (192 aa)) are cytoplasmic.

The protein belongs to the ALG14 family. Forms with ALG13 the active heterodimeric UDP-N-acetylglucosamine transferase complex.

It localises to the endoplasmic reticulum membrane. Functionally, part of the UDP-N-acetylglucosamine transferase complex that operates in the biosynthetic pathway of dolichol-linked oligosaccharides, the glycan precursors employed in protein asparagine (N)-glycosylation. The assembly of dolichol-linked oligosaccharides begins on the cytosolic side of the endoplasmic reticulum membrane and finishes in its lumen. The sequential addition of sugars to dolichol pyrophosphate produces dolichol-linked oligosaccharides containing fourteen sugars, including two GlcNAcs, nine mannoses and three glucoses. Once assembled, the oligosaccharides are transferred from the lipid to nascent proteins by oligosaccharyltransferases. Functions as a protein-membrane adapter recruiting ALG13 at the cytoplasmic face of the endoplasmic reticulum, where the complex catalyzes the second step of dolichol pyrophosphate biosynthesis, transferring a beta1,4-linked N-acetylglucosamine (GlcNAc) from UDP-GlcNAc to GlcNAc-pyrophosphatedolichol (Gn-PDol) to produce N,N'-diacetylchitobiosyl diphosphodolichol. N,N'-diacetylchitobiosyl diphosphodolichol is a substrate for ALG1, the following enzyme in the biosynthetic pathway. This Rattus norvegicus (Rat) protein is UDP-N-acetylglucosamine transferase subunit ALG14.